A 1065-amino-acid polypeptide reads, in one-letter code: DNA ligase 4 (1065 aa).

The interval 1-20 (MAVHAPYNHAPPPTQEINGQ) is disordered. Residues Glu-295, Lys-297, Leu-298, Arg-302, Glu-357, Phe-387, Glu-452, Lys-457, Lys-474, and Lys-476 each contribute to the ATP site. Lys-297 serves as the catalytic N6-AMP-lysine intermediate. Residue Glu-357 participates in Mg(2+) binding. Mg(2+) is bound at residue Glu-452. One can recognise a BRCT 1 domain in the interval 696–775 (VETSIFSDMT…TALPFLKEFL (80 aa)). The disordered stretch occupies residues 825-928 (GEDKDEIDVE…SDVGVNGDDY (104 aa)). Composition is skewed to basic and acidic residues over residues 834–864 (EESR…KKLQ) and 886–900 (MSLK…ERSR). One can recognise a BRCT 2 domain in the interval 954–1064 (DEDRIFYHLA…TLLDEDLYKP (111 aa)).

The protein belongs to the ATP-dependent DNA ligase family. Mg(2+) serves as cofactor.

Its subcellular location is the nucleus. The enzyme catalyses ATP + (deoxyribonucleotide)n-3'-hydroxyl + 5'-phospho-(deoxyribonucleotide)m = (deoxyribonucleotide)n+m + AMP + diphosphate.. In terms of biological role, DNA ligase involved in DNA non-homologous end joining (NHEJ); required for double-strand break (DSB) repair. The sequence is that of DNA ligase 4 (LIG4) from Cryptococcus neoformans var. neoformans serotype D (strain B-3501A) (Filobasidiella neoformans).